We begin with the raw amino-acid sequence, 693 residues long: Elongation factor G (693 aa).

The tr-type G domain maps to 8–282; that stretch reads EKTRNIGIMA…AVIDYLPSPL (275 aa). Residues 17–24, 81–85, and 135–138 each bind GTP; these read AHIDAGKT, DTPGH, and NKMD.

This sequence belongs to the TRAFAC class translation factor GTPase superfamily. Classic translation factor GTPase family. EF-G/EF-2 subfamily.

Its subcellular location is the cytoplasm. Functionally, catalyzes the GTP-dependent ribosomal translocation step during translation elongation. During this step, the ribosome changes from the pre-translocational (PRE) to the post-translocational (POST) state as the newly formed A-site-bound peptidyl-tRNA and P-site-bound deacylated tRNA move to the P and E sites, respectively. Catalyzes the coordinated movement of the two tRNA molecules, the mRNA and conformational changes in the ribosome. This Staphylococcus carnosus (strain TM300) protein is Elongation factor G.